The following is a 155-amino-acid chain: MDELKHQVMINQFVLTAGCAADQAKQLLQAAHWQFETALSAFFQETNIPYGHHHQMMCTPANTPATPPNFPDALTMFSRLKASESFNSSSSPSMATSPPPPPVSWGMAPPMANQQSLWTQGPSAQQTHPPPGWPSAVNQQAASEQKASAAMEAER.

The segment at 81 to 155 (KASESFNSSS…KASAAMEAER (75 aa)) is disordered. Low complexity predominate over residues 83–96 (SESFNSSSSPSMAT). Over residues 112 to 127 (ANQQSLWTQGPSAQQT) the composition is skewed to polar residues. Positions 139–155 (QQAASEQKASAAMEAER) are enriched in low complexity.

Belongs to the UBALD family.

This Danio rerio (Zebrafish) protein is UBA-like domain-containing protein 1 (ubald1).